Reading from the N-terminus, the 301-residue chain is Phosphatidylglycerol--prolipoprotein diacylglyceryl transferase (301 aa).

4 helical membrane passes run 10–30 (IAFS…LAGF), 57–77 (LLFY…MLFY), 92–112 (VWEG…AVAW), and 119–139 (MHMF…LGFG). Residue Arg140 coordinates a 1,2-diacyl-sn-glycero-3-phospho-(1'-sn-glycerol). 3 helical membrane passes run 202 to 222 (PSQL…LWLF), 230 to 250 (YAVS…VEFV), and 264 to 284 (LTRG…LFWL).

It belongs to the Lgt family.

The protein localises to the cell inner membrane. It catalyses the reaction L-cysteinyl-[prolipoprotein] + a 1,2-diacyl-sn-glycero-3-phospho-(1'-sn-glycerol) = an S-1,2-diacyl-sn-glyceryl-L-cysteinyl-[prolipoprotein] + sn-glycerol 1-phosphate + H(+). It functions in the pathway protein modification; lipoprotein biosynthesis (diacylglyceryl transfer). Catalyzes the transfer of the diacylglyceryl group from phosphatidylglycerol to the sulfhydryl group of the N-terminal cysteine of a prolipoprotein, the first step in the formation of mature lipoproteins. This Xylella fastidiosa (strain M23) protein is Phosphatidylglycerol--prolipoprotein diacylglyceryl transferase.